The chain runs to 444 residues: P2X purinoceptor 5 (444 aa).

Residues M1–G30 lie on the Cytoplasmic side of the membrane. Residues L31–I51 traverse the membrane as a helical segment. Residues K52–R319 are Extracellular-facing. N77 carries an N-linked (GlcNAc...) asparagine glycan. Cystine bridges form between C118–C169, C129–C152, and C135–C163. N202 carries an N-linked (GlcNAc...) asparagine glycan. 2 disulfide bridges follow: C220–C229 and C263–C272. Residues F320–I362 traverse the membrane as a helical segment. At K363–T444 the chain is on the cytoplasmic side. The disordered stretch occupies residues G378–T444.

Belongs to the P2X receptor family. As to quaternary structure, functional P2XRs are organized as homomeric and heteromeric trimers. Homotrimer. Forms heterotrimer with P2RX1. In terms of tissue distribution, expressed at high levels in brain and immune system.

Its subcellular location is the cell membrane. It catalyses the reaction Na(+)(in) = Na(+)(out). It carries out the reaction Ca(2+)(in) = Ca(2+)(out). The enzyme catalyses chloride(in) = chloride(out). With respect to regulation, activated by ATP. Slowly desensitizing. Sensitive to the ATP agonist alpha/beta-methylene-ATP. Functionally, ATP-gated nonselective transmembrane cation channel permeable to potassium, sodium and calcium. Unlike other P2RX receptors, the P2X5 receptor is also permeable to chloride. May play a supporting role in the inflammatory response. Non-functional. This chain is P2X purinoceptor 5, found in Homo sapiens (Human).